Reading from the N-terminus, the 495-residue chain is Glucose-6-phosphate 1-dehydrogenase (495 aa).

Ser-1 carries the post-translational modification N-acetylserine. NADP(+) contacts are provided by residues Gly-15 to Arg-22, Arg-49, and Lys-149. D-glucose 6-phosphate-binding positions include Lys-149, His-179 to Lys-183, Glu-217, and Asp-236. The active-site Proton acceptor is the His-241. Arg-332 is an NADP(+) binding site. D-glucose 6-phosphate is bound at residue Lys-335. NADP(+)-binding residues include Lys-341, Arg-345, and Arg-367. Gln-369 contributes to the D-glucose 6-phosphate binding site. NADP(+)-binding positions include Tyr-375 to Lys-377, Asp-395 to Thr-397, and Lys-463.

Belongs to the glucose-6-phosphate dehydrogenase family.

It carries out the reaction D-glucose 6-phosphate + NADP(+) = 6-phospho-D-glucono-1,5-lactone + NADPH + H(+). It participates in carbohydrate degradation; pentose phosphate pathway; D-ribulose 5-phosphate from D-glucose 6-phosphate (oxidative stage): step 1/3. Functionally, catalyzes the rate-limiting step of the oxidative pentose-phosphate pathway, which represents a route for the dissimilation of carbohydrates besides glycolysis. The main function of this enzyme is to provide reducing power (NADPH) and pentose phosphates for fatty acid and nucleic acid synthesis. This chain is Glucose-6-phosphate 1-dehydrogenase, found in Cyberlindnera jadinii (Torula yeast).